The sequence spans 177 residues: Translation initiation factor IF-3 (177 aa).

Belongs to the IF-3 family. As to quaternary structure, monomer.

The protein resides in the cytoplasm. Its function is as follows. IF-3 binds to the 30S ribosomal subunit and shifts the equilibrium between 70S ribosomes and their 50S and 30S subunits in favor of the free subunits, thus enhancing the availability of 30S subunits on which protein synthesis initiation begins. The polypeptide is Translation initiation factor IF-3 (Nitratiruptor sp. (strain SB155-2)).